Reading from the N-terminus, the 570-residue chain is Methyl-coenzyme M reductase subunit alpha (570 aa).

Position 161 (Q161) interacts with coenzyme F430. Residues R239, 270–271 (KH), and R284 each bind coenzyme B. Position 271 is a pros-methylhistidine (H271). Residue R285 is modified to 5-methylarginine. Coenzyme M-binding residues include Y346 and F464. G465 is modified (1-thioglycine). At D470 the chain carries (Z)-2,3-didehydroaspartate. S-methylcysteine is present on C472.

The protein belongs to the methyl-coenzyme M reductase alpha subunit family. MCR is a hexamer of two alpha, two beta, and two gamma chains, forming a dimer of heterotrimers. Coenzyme F430 is required as a cofactor. Post-translationally, the alpha subunit contains five modified amino acids near the active site region. Is methylated on His-271, Arg-285 and Cys-472, probably by the action of specific S-adenosylmethionine-dependent methyltransferases. Also contains a thioglycine at position 465, forming a thiopeptide bond. Contains a didehydroaspartate residue at position 470. The methylation on C5 of Arg-285 is a post-translational methylation not essential in vivo, but which plays a role for the stability and structural integrity of MCR. Does not show a methylation at Gln-420, as shown for M.marburgensis.

The protein localises to the cytoplasm. The catalysed reaction is coenzyme B + methyl-coenzyme M = methane + coenzyme M-coenzyme B heterodisulfide. The protein operates within one-carbon metabolism; methyl-coenzyme M reduction; methane from methyl-coenzyme M: step 1/1. Its function is as follows. Component of the methyl-coenzyme M reductase (MCR) I that catalyzes the reductive cleavage of methyl-coenzyme M (CoM-S-CH3 or 2-(methylthio)ethanesulfonate) using coenzyme B (CoB or 7-mercaptoheptanoylthreonine phosphate) as reductant which results in the production of methane and the mixed heterodisulfide of CoB and CoM (CoM-S-S-CoB). This is the final step in methanogenesis. In Methanosarcina barkeri (strain Fusaro / DSM 804), this protein is Methyl-coenzyme M reductase subunit alpha (mcrA).